The sequence spans 410 residues: LL-diaminopimelate aminotransferase (410 aa).

Substrate-binding residues include Tyr15 and Gly42. Pyridoxal 5'-phosphate contacts are provided by residues Tyr72, 108–109 (AK), Tyr132, Asn187, Tyr218, and 246–248 (SFS). The substrate site is built by Lys109, Tyr132, and Asn187. N6-(pyridoxal phosphate)lysine is present on Lys249. Positions 257 and 292 each coordinate pyridoxal 5'-phosphate. Residues Asn292 and Arg388 each coordinate substrate.

It belongs to the class-I pyridoxal-phosphate-dependent aminotransferase family. LL-diaminopimelate aminotransferase subfamily. As to quaternary structure, homodimer. Pyridoxal 5'-phosphate serves as cofactor.

It carries out the reaction (2S,6S)-2,6-diaminopimelate + 2-oxoglutarate = (S)-2,3,4,5-tetrahydrodipicolinate + L-glutamate + H2O + H(+). The protein operates within amino-acid biosynthesis; L-lysine biosynthesis via DAP pathway; LL-2,6-diaminopimelate from (S)-tetrahydrodipicolinate (aminotransferase route): step 1/1. Functionally, involved in the synthesis of meso-diaminopimelate (m-DAP or DL-DAP), required for both lysine and peptidoglycan biosynthesis. Catalyzes the direct conversion of tetrahydrodipicolinate to LL-diaminopimelate. Is also able to catalyze the reverse reaction in vitro, i.e. the transamination of LL-diaminopimelate with 2-oxoglutarate to produce 2-oxo-6-aminopimelate (in equilibrium with tetrahydrodipicolinate) and glutamate. Has maximal aminotransferase activity using 2-oxoglutarate as an amino group acceptor, and cannot use oxaloacetate instead of 2-oxoglutarate, although 2-oxoadipate can substitute with 21% relative activity. Cannot use m-DAP, lysine or ornithine as the amino-group donor, when using 2-oxoglutarate as the amino-group acceptor. This chain is LL-diaminopimelate aminotransferase, found in Methanothermobacter thermautotrophicus (strain ATCC 29096 / DSM 1053 / JCM 10044 / NBRC 100330 / Delta H) (Methanobacterium thermoautotrophicum).